The following is a 111-amino-acid chain: Large ribosomal subunit protein bL21 (111 aa).

The protein belongs to the bacterial ribosomal protein bL21 family. As to quaternary structure, part of the 50S ribosomal subunit. Contacts protein L20.

In terms of biological role, this protein binds to 23S rRNA in the presence of protein L20. The chain is Large ribosomal subunit protein bL21 from Thermosynechococcus vestitus (strain NIES-2133 / IAM M-273 / BP-1).